We begin with the raw amino-acid sequence, 220 residues long: Metalloproteinase inhibitor 2 (220 aa).

Residues 1-26 form the signal peptide; sequence MGAAARSLRLALGLLLLATLPRPADA. Cys27 contacts Zn(2+). Involved in metalloproteinase-binding stretches follow at residues 27 to 30 and 95 to 96; these read CSCS and SA. 6 disulfide bridges follow: Cys27–Cys98, Cys29–Cys127, Cys39–Cys152, Cys154–Cys201, Cys159–Cys164, and Cys172–Cys193. The NTR domain occupies 27-152; the sequence is CSCSPVHPQQ…SLNHRYQMGC (126 aa).

Belongs to the protease inhibitor I35 (TIMP) family. As to quaternary structure, interacts (via the C-terminal) with MMP2 (via the C-terminal PEX domain); the interaction inhibits the MMP2 activity. In terms of processing, the activity of TIMP2 is dependent on the presence of disulfide bonds.

The protein resides in the secreted. Its function is as follows. Complexes with metalloproteinases (such as collagenases) and irreversibly inactivates them by binding to their catalytic zinc cofactor. The polypeptide is Metalloproteinase inhibitor 2 (TIMP2) (Canis lupus familiaris (Dog)).